Here is a 473-residue protein sequence, read N- to C-terminus: Ribulose bisphosphate carboxylase large chain (473 aa).

2 residues coordinate substrate: Asn116 and Thr166. Lys168 functions as the Proton acceptor in the catalytic mechanism. Lys170 provides a ligand contact to substrate. Mg(2+) is bound by residues Lys194, Asp196, and Glu197. At Lys194 the chain carries N6-carboxylysine. The Proton acceptor role is filled by His287. Residues Arg288, His320, and Ser372 each contribute to the substrate site.

This sequence belongs to the RuBisCO large chain family. Type I subfamily. Heterohexadecamer of 8 large chains and 8 small chains. Mg(2+) serves as cofactor.

The enzyme catalyses 2 (2R)-3-phosphoglycerate + 2 H(+) = D-ribulose 1,5-bisphosphate + CO2 + H2O. It catalyses the reaction D-ribulose 1,5-bisphosphate + O2 = 2-phosphoglycolate + (2R)-3-phosphoglycerate + 2 H(+). Its function is as follows. RuBisCO catalyzes two reactions: the carboxylation of D-ribulose 1,5-bisphosphate, the primary event in carbon dioxide fixation, as well as the oxidative fragmentation of the pentose substrate. Both reactions occur simultaneously and in competition at the same active site. This chain is Ribulose bisphosphate carboxylase large chain, found in Nitrosospira sp. (strain TCH716).